We begin with the raw amino-acid sequence, 370 residues long: MFKVGMINLGDKQSTIVVAMSGGVDSSAVAAMLHEQGHNVIGITLQLYDHGMAVGKKNACCAGQDIYDAKMVANKLGIPHYVLDYENKFKESVIDNFVDSYLQGETPLPCVQCNKSVKFRDLIKTARELGADKLATGHYVRKINGDNGAELHTGLDPAKDQSYFLFTTTKEQLEYLRFPLGGLTKDETRKLASKFGLEVADKPDSQDICFIPDGNYKSVINKIRPNSSESGKIIHVNGFELGEHSGIINYTIGQRRGLGIAYNEPLYVVKIDPKDNIVYVGPESALNVQEFIIRDVNWLADEIKDNEKLEVAVKIRSTRPPRLAEISKLGDDKMKVKFLCEEKAVAPGQACVIYAGERVLGGGWITREIR.

ATP contacts are provided by residues 19-26 (AMSGGVDS) and leucine 45. Cysteine 113 serves as the catalytic Nucleophile. A disulfide bridge links cysteine 113 with cysteine 209. Glycine 137 serves as a coordination point for ATP. Positions 159 to 161 (KDQ) are interaction with tRNA. Cysteine 209 serves as the catalytic Cysteine persulfide intermediate.

It belongs to the MnmA/TRMU family.

The protein localises to the cytoplasm. It carries out the reaction S-sulfanyl-L-cysteinyl-[protein] + uridine(34) in tRNA + AH2 + ATP = 2-thiouridine(34) in tRNA + L-cysteinyl-[protein] + A + AMP + diphosphate + H(+). Its function is as follows. Catalyzes the 2-thiolation of uridine at the wobble position (U34) of tRNA, leading to the formation of s(2)U34. This Rickettsia conorii (strain ATCC VR-613 / Malish 7) protein is tRNA-specific 2-thiouridylase MnmA.